The sequence spans 243 residues: Segregation and condensation protein A (243 aa).

The protein belongs to the ScpA family. Component of a cohesin-like complex composed of ScpA, ScpB and the Smc homodimer, in which ScpA and ScpB bind to the head domain of Smc. The presence of the three proteins is required for the association of the complex with DNA.

It localises to the cytoplasm. Participates in chromosomal partition during cell division. May act via the formation of a condensin-like complex containing Smc and ScpB that pull DNA away from mid-cell into both cell halves. This chain is Segregation and condensation protein A, found in Thermoanaerobacter pseudethanolicus (strain ATCC 33223 / 39E) (Clostridium thermohydrosulfuricum).